The following is a 90-amino-acid chain: Large ribosomal subunit protein eL34 (90 aa).

The disordered stretch occupies residues alanine 38 to proline 65. The segment covering arginine 51 to alanine 62 has biased composition (basic residues).

This sequence belongs to the eukaryotic ribosomal protein eL34 family.

The sequence is that of Large ribosomal subunit protein eL34 (rpl34e) from Aeropyrum pernix (strain ATCC 700893 / DSM 11879 / JCM 9820 / NBRC 100138 / K1).